The chain runs to 335 residues: Vitamin B12 import system permease protein BtuC (335 aa).

8 consecutive transmembrane segments (helical) span residues 25–45 (LVVMLLFALLISLCAGDVWIW), 67–87 (MAVIMVGASLAVSGAVMQALF), 94–113 (PGLLGVANGAGVALVTAVLL), 117–139 (LLPIWVLSTCAIIGALLMTSILL), 153–173 (LLVGVALGIICSAMMTWAVYF), 243–263 (VLAIGLLVGISVALAGVISFI), 281–301 (RLLAGCAFAGGGVLLLADVVA), and 309–329 (ELPIGVVTATLGSPLFIWLLI).

The protein belongs to the binding-protein-dependent transport system permease family. FecCD subfamily. In terms of assembly, the complex is composed of two ATP-binding proteins (BtuD), two transmembrane proteins (BtuC) and a solute-binding protein (BtuF).

Its subcellular location is the cell inner membrane. Its function is as follows. Part of the ABC transporter complex BtuCDF involved in vitamin B12 import. Involved in the translocation of the substrate across the membrane. This Yersinia pseudotuberculosis serotype O:1b (strain IP 31758) protein is Vitamin B12 import system permease protein BtuC.